We begin with the raw amino-acid sequence, 226 residues long: Putative DNA repair protein recA homolog 4 (226 aa).

41 to 48 (GPEASGKT) serves as a coordination point for ATP.

This sequence belongs to the RecA family.

It localises to the cytoplasm. Its function is as follows. Involved in recombination ability and DNA strand transfer activity. This is Putative DNA repair protein recA homolog 4 from Arabidopsis thaliana (Mouse-ear cress).